Consider the following 885-residue polypeptide: Leucine--tRNA ligase (885 aa).

Positions 46–56 match the 'HIGH' region motif; the sequence is PYPSGALHMGH. The 'KMSKS' region motif lies at 638-642; that stretch reads KMSKS. Residue K641 coordinates ATP.

Belongs to the class-I aminoacyl-tRNA synthetase family.

The protein resides in the cytoplasm. The catalysed reaction is tRNA(Leu) + L-leucine + ATP = L-leucyl-tRNA(Leu) + AMP + diphosphate. The polypeptide is Leucine--tRNA ligase (Xanthomonas campestris pv. campestris (strain B100)).